The primary structure comprises 203 residues: Holliday junction branch migration complex subunit RuvA (203 aa).

Positions 1–63 (MIGKLSGKVD…EEHMHLYGFL (63 aa)) are domain I. The interval 64–142 (TLEEKIFFNL…KISSGSAIIK (79 aa)) is domain II. The interval 143-149 (ESLNIKN) is flexible linker. The tract at residues 150-203 (ITPVASNEVIKALVNLGFSRFEAQNAVQGIITQNPEISIDELIKTALKNRNSNF) is domain III.

It belongs to the RuvA family. As to quaternary structure, homotetramer. Forms an RuvA(8)-RuvB(12)-Holliday junction (HJ) complex. HJ DNA is sandwiched between 2 RuvA tetramers; dsDNA enters through RuvA and exits via RuvB. An RuvB hexamer assembles on each DNA strand where it exits the tetramer. Each RuvB hexamer is contacted by two RuvA subunits (via domain III) on 2 adjacent RuvB subunits; this complex drives branch migration. In the full resolvosome a probable DNA-RuvA(4)-RuvB(12)-RuvC(2) complex forms which resolves the HJ.

It localises to the cytoplasm. The RuvA-RuvB-RuvC complex processes Holliday junction (HJ) DNA during genetic recombination and DNA repair, while the RuvA-RuvB complex plays an important role in the rescue of blocked DNA replication forks via replication fork reversal (RFR). RuvA specifically binds to HJ cruciform DNA, conferring on it an open structure. The RuvB hexamer acts as an ATP-dependent pump, pulling dsDNA into and through the RuvAB complex. HJ branch migration allows RuvC to scan DNA until it finds its consensus sequence, where it cleaves and resolves the cruciform DNA. The protein is Holliday junction branch migration complex subunit RuvA of Rickettsia peacockii (strain Rustic).